The sequence spans 270 residues: F-actin-capping protein subunit beta (270 aa).

This sequence belongs to the F-actin-capping protein beta subunit family. As to quaternary structure, component of the F-actin capping complex, composed of a heterodimer of an alpha and a beta subunit.

Its subcellular location is the cytoplasm. It localises to the cytoskeleton. F-actin-capping proteins bind in a Ca(2+)-independent manner to the fast growing ends of actin filaments (barbed end) thereby blocking the exchange of subunits at these ends. Unlike other capping proteins (such as gelsolin and severin), these proteins do not sever actin filaments. This chain is F-actin-capping protein subunit beta (cap-2), found in Caenorhabditis elegans.